The sequence spans 876 residues: Leucine--tRNA ligase (876 aa).

A 'HIGH' region motif is present at residues 43-53; the sequence is PYPSGRIHMGH. Positions 632–636 match the 'KMSKS' region motif; sequence KMSKS. An ATP-binding site is contributed by Lys-635.

It belongs to the class-I aminoacyl-tRNA synthetase family.

It is found in the cytoplasm. The enzyme catalyses tRNA(Leu) + L-leucine + ATP = L-leucyl-tRNA(Leu) + AMP + diphosphate. The polypeptide is Leucine--tRNA ligase (Sinorhizobium fredii (strain NBRC 101917 / NGR234)).